Reading from the N-terminus, the 153-residue chain is Endoribonuclease YbeY (153 aa).

Residues histidine 114, histidine 118, and histidine 124 each contribute to the Zn(2+) site.

Belongs to the endoribonuclease YbeY family. Zn(2+) serves as cofactor.

It localises to the cytoplasm. In terms of biological role, single strand-specific metallo-endoribonuclease involved in late-stage 70S ribosome quality control and in maturation of the 3' terminus of the 16S rRNA. In Nitrosococcus oceani (strain ATCC 19707 / BCRC 17464 / JCM 30415 / NCIMB 11848 / C-107), this protein is Endoribonuclease YbeY.